The chain runs to 197 residues: Endo-1,4-beta-xylanase A (197 aa).

In terms of domain architecture, GH11 spans 1–197; sequence SGTPSSTGTD…SSGTATITVT (197 aa). The active-site Nucleophile is the glutamate 87. The cysteines at positions 111 and 160 are disulfide-linked. Glutamate 184 acts as the Proton donor in catalysis.

It belongs to the glycosyl hydrolase 11 (cellulase G) family.

It is found in the secreted. The enzyme catalyses Endohydrolysis of (1-&gt;4)-beta-D-xylosidic linkages in xylans.. Its pathway is glycan degradation; xylan degradation. Its function is as follows. Hydrolyzes xylans into xylobiose and xylose. This chain is Endo-1,4-beta-xylanase A (XYNA), found in Schizophyllum commune (Split gill fungus).